The sequence spans 467 residues: Asparagine--tRNA ligase (467 aa).

This sequence belongs to the class-II aminoacyl-tRNA synthetase family. As to quaternary structure, homodimer.

The protein resides in the cytoplasm. The catalysed reaction is tRNA(Asn) + L-asparagine + ATP = L-asparaginyl-tRNA(Asn) + AMP + diphosphate + H(+). This Actinobacillus pleuropneumoniae serotype 5b (strain L20) protein is Asparagine--tRNA ligase.